Here is a 587-residue protein sequence, read N- to C-terminus: Lipoprotein LpqB (587 aa).

Residues 1–19 (MERLMRLTILLFLGAVLAG) form the signal peptide. Cys-20 is lipidated: N-palmitoyl cysteine. The S-diacylglycerol cysteine moiety is linked to residue Cys-20.

It belongs to the LpqB lipoprotein family.

Its subcellular location is the cell membrane. In Mycobacterium bovis (strain ATCC BAA-935 / AF2122/97), this protein is Lipoprotein LpqB.